Consider the following 252-residue polypeptide: 3-dehydroquinate dehydratase (252 aa).

3-dehydroquinate-binding positions include Ser-21, 46–48, and Arg-82; that span reads EWR. The active-site Proton donor/acceptor is His-143. Lys-170 acts as the Schiff-base intermediate with substrate in catalysis. 3 residues coordinate 3-dehydroquinate: Arg-213, Ser-232, and Gln-236.

It belongs to the type-I 3-dehydroquinase family. In terms of assembly, homodimer.

The catalysed reaction is 3-dehydroquinate = 3-dehydroshikimate + H2O. It participates in metabolic intermediate biosynthesis; chorismate biosynthesis; chorismate from D-erythrose 4-phosphate and phosphoenolpyruvate: step 3/7. In terms of biological role, involved in the third step of the chorismate pathway, which leads to the biosynthesis of aromatic amino acids. Catalyzes the cis-dehydration of 3-dehydroquinate (DHQ) and introduces the first double bond of the aromatic ring to yield 3-dehydroshikimate. The polypeptide is 3-dehydroquinate dehydratase (Escherichia coli (strain SE11)).